The chain runs to 98 residues: Large ribosomal subunit protein uL23 (98 aa).

Belongs to the universal ribosomal protein uL23 family. As to quaternary structure, part of the 50S ribosomal subunit. Contacts protein L29, and trigger factor when it is bound to the ribosome.

Functionally, one of the early assembly proteins it binds 23S rRNA. One of the proteins that surrounds the polypeptide exit tunnel on the outside of the ribosome. Forms the main docking site for trigger factor binding to the ribosome. The sequence is that of Large ribosomal subunit protein uL23 from Bifidobacterium longum (strain DJO10A).